The sequence spans 574 residues: Glutamyl-tRNA(Gln) amidotransferase subunit B, mitochondrial (574 aa).

Residues 1 to 12 constitute a mitochondrion transit peptide; sequence MIRQFVSHRGIP. The tract at residues 34–62 is disordered; it reads PLGRKNWSTSDEAKSKRAAMRKGGAPPPE.

It belongs to the GatB/GatE family. GatB subfamily. As to quaternary structure, subunit of the heterotrimeric GatCAB amidotransferase (AdT) complex, composed of A, B and C subunits.

The protein localises to the mitochondrion. The enzyme catalyses L-glutamyl-tRNA(Gln) + L-glutamine + ATP + H2O = L-glutaminyl-tRNA(Gln) + L-glutamate + ADP + phosphate + H(+). Functionally, allows the formation of correctly charged Gln-tRNA(Gln) through the transamidation of misacylated Glu-tRNA(Gln) in the mitochondria. The reaction takes place in the presence of glutamine and ATP through an activated gamma-phospho-Glu-tRNA(Gln). The polypeptide is Glutamyl-tRNA(Gln) amidotransferase subunit B, mitochondrial (Ajellomyces capsulatus (strain H143) (Darling's disease fungus)).